We begin with the raw amino-acid sequence, 149 residues long: Nucleoside diphosphate kinase (149 aa).

ATP is bound by residues lysine 9, phenylalanine 57, arginine 85, threonine 91, arginine 102, and asparagine 112. Residue histidine 115 is the Pros-phosphohistidine intermediate of the active site.

This sequence belongs to the NDK family. In terms of assembly, homotetramer. It depends on Mg(2+) as a cofactor.

It localises to the cytoplasm. It carries out the reaction a 2'-deoxyribonucleoside 5'-diphosphate + ATP = a 2'-deoxyribonucleoside 5'-triphosphate + ADP. It catalyses the reaction a ribonucleoside 5'-diphosphate + ATP = a ribonucleoside 5'-triphosphate + ADP. Functionally, major role in the synthesis of nucleoside triphosphates other than ATP. The ATP gamma phosphate is transferred to the NDP beta phosphate via a ping-pong mechanism, using a phosphorylated active-site intermediate. This chain is Nucleoside diphosphate kinase, found in Carboxydothermus hydrogenoformans (strain ATCC BAA-161 / DSM 6008 / Z-2901).